The sequence spans 2291 residues: Spectrin beta chain (2291 aa).

The segment at 1-271 (MTTDISIVRW…IITYVVTYYH (271 aa)) is actin-binding. Calponin-homology (CH) domains follow at residues 50 to 154 (SVQK…LRFQ) and 169 to 274 (KSAK…HYFS). Spectrin repeat units lie at residues 300-408 (VHDY…ALRE), 420-521 (AARF…MRLE), 525-633 (QLQQ…RLEE), 636-739 (KLWQ…RLEN), 743-843 (YFQL…QRLL), 848-948 (LYKL…MDDL), 954-1057 (VQTF…KLEE), 1060-1166 (DLHR…VLLS), 1170-1272 (DQQL…EKLK), 1276-1376 (KLHE…GAML), 1386-1484 (QQTC…KALE), 1488-1591 (EAFQ…HLLE), 1594-1697 (KVQQ…RLNE), 1701-1802 (LFML…TQML), 1807-1909 (ELHK…QKLA), 1913-2015 (DLFR…ENLQ), and 2020-2089 (VYQF…KEMK). Over residues 2097-2140 (EAERQRIKEEQEAKAASEAAEQAKREAERRDDVDVGASHDDSER) the composition is skewed to basic and acidic residues. Positions 2097–2152 (EAERQRIKEEQEAKAASEAAEQAKREAERRDDVDVGASHDDSERGGTPGAGEGHEG) are disordered. A PH domain is found at 2147-2259 (GEGHEGYVTR…WVTSLKAQSD (113 aa)). A Phosphoserine modification is found at Ser2195. Over residues 2262–2275 (AVAASRSQTLPATS) the composition is skewed to polar residues. The tract at residues 2262–2291 (AVAASRSQTLPATSQKDEPKRRSFFTLKKK) is disordered.

This sequence belongs to the spectrin family. In terms of assembly, native spectrin molecule is a tetramer composed of two antiparallel heterodimers joined head to head so that each end of the native molecule includes the C-terminus of the alpha subunit and the N-terminus of the beta subunit.

It is found in the cytoplasm. The protein resides in the cytoskeleton. Its subcellular location is the cell cortex. In terms of biological role, spectrin is the major constituent of the cytoskeletal network underlying the erythrocyte plasma membrane. It associates with band 4.1 and actin to form the cytoskeletal superstructure of the erythrocyte plasma membrane. Interacts with calmodulin in a calcium-dependent manner. This is Spectrin beta chain (beta-Spec) from Drosophila melanogaster (Fruit fly).